We begin with the raw amino-acid sequence, 276 residues long: 4-deoxy-L-threo-5-hexosulose-uronate ketol-isomerase (276 aa).

The Zn(2+) site is built by His-194, His-196, Glu-201, and His-243.

The protein belongs to the KduI family. The cofactor is Zn(2+).

It carries out the reaction 5-dehydro-4-deoxy-D-glucuronate = 3-deoxy-D-glycero-2,5-hexodiulosonate. The protein operates within glycan metabolism; pectin degradation; 2-dehydro-3-deoxy-D-gluconate from pectin: step 4/5. Functionally, catalyzes the isomerization of 5-dehydro-4-deoxy-D-glucuronate to 3-deoxy-D-glycero-2,5-hexodiulosonate. This chain is 4-deoxy-L-threo-5-hexosulose-uronate ketol-isomerase, found in Shouchella clausii (strain KSM-K16) (Alkalihalobacillus clausii).